The following is a 78-amino-acid chain: Large ribosomal subunit protein bL28 (78 aa).

A disordered region spans residues 1–20 (MSQVCQVTGKRPVVGNNRSH).

It belongs to the bacterial ribosomal protein bL28 family.

The protein is Large ribosomal subunit protein bL28 of Idiomarina loihiensis (strain ATCC BAA-735 / DSM 15497 / L2-TR).